The sequence spans 273 residues: MWKAGSMSAELGIGFALRAVNERVQQAVARRPRDLPAIQPRLVAVSKTKPADMVIEAYSHGQRTFGENYVQELLEKASNPQILSSCPEIKWHFIGHLQKQNVNKLMAVPNLSMLETVDSVKLADKVNSAWQKKGSPERLKVMVQINTSGEASKHGLPPAEMAALVEHINAKCPSLEFVGLMTIGSFGHDLSQGPNPDFQVLLSLREELCRKLGAPPEQVELSMGMSVDFQHAIEVGSTNVRIGSTIFGERDYSKKTDKPAAELQAPEEVAQAH.

S6 carries the phosphoserine modification. The residue at position 47 (K47) is an N6-(pyridoxal phosphate)lysine. Position 69 is a phosphotyrosine (Y69). The residue at position 125 (K125) is an N6-succinyllysine. 2 positions are modified to phosphoserine: S226 and S244. The span at 251-260 (DYSKKTDKPA) shows a compositional bias: basic and acidic residues. The interval 251-273 (DYSKKTDKPAAELQAPEEVAQAH) is disordered.

This sequence belongs to the pyridoxal phosphate-binding protein YggS/PROSC family.

Its function is as follows. Pyridoxal 5'-phosphate (PLP)-binding protein, which may be involved in intracellular homeostatic regulation of pyridoxal 5'-phosphate (PLP), the active form of vitamin B6. The chain is Pyridoxal phosphate homeostasis protein from Bos taurus (Bovine).